A 66-amino-acid polypeptide reads, in one-letter code: UPF0337 protein spyM18_1212 (66 aa).

Belongs to the UPF0337 (CsbD) family.

This Streptococcus pyogenes serotype M18 (strain MGAS8232) protein is UPF0337 protein spyM18_1212.